Here is a 320-residue protein sequence, read N- to C-terminus: Ino eighty subunit 2 (320 aa).

Acidic residues-rich tracts occupy residues 1–12 (MDSEASDIEAEL) and 22–35 (EYID…DIDD). Disordered regions lie at residues 1 to 232 (MDSE…SKKK) and 244 to 306 (ENAR…EGMT). The segment covering 42–59 (SSRRTARRSVPKGVRTSK) has biased composition (basic residues). Residue S67 is modified to Phosphoserine. The span at 68-80 (VEVDEDYDEEEDV) shows a compositional bias: acidic residues. The segment covering 105–116 (EKSDIGDSKGND) has biased composition (basic and acidic residues). Positions 117 to 130 (GEIEDGILEEEESL) are enriched in acidic residues. Position 129 is a phosphoserine (S129). The segment covering 131–147 (EKELNRGGGKEVEKSEE) has biased composition (basic and acidic residues). The segment covering 161–174 (EEQDGESGGYEDNE) has biased composition (acidic residues). The span at 207–217 (TDSTRSTTTRS) shows a compositional bias: low complexity. Basic and acidic residues predominate over residues 244–264 (ENARKRKNLSEKRLEEEKQDT). Residues 268–278 (LLKKRAGKSRS) show a composition bias toward basic residues.

It belongs to the IES2 family. As to quaternary structure, component of the chromatin-remodeling INO80 complex, at least composed of ARP4, ARP5, ARP8, RVB1, RVB2, TAF14, NHP10, IES1, IES3, IES4, IES6, ACT1, IES2, IES5 and INO80.

It is found in the nucleus. In terms of biological role, component of the INO80 complex which remodels chromatin by shifting nucleosomes and is involved in DNA repair. The protein is Ino eighty subunit 2 (IES2) of Saccharomyces cerevisiae (strain ATCC 204508 / S288c) (Baker's yeast).